Reading from the N-terminus, the 129-residue chain is MYFLYVGVFGALGGMCRYAMNLWLGGGDFPSATLAVNLIGCFLLAFLMRFLAEKSRVSLVLLNGIGTGFIGAFTTFSAFSVDTIQLVQSGAWLFAVSYVLASFIGGLIMVKFGRMLSNKLLNRGEHRVG.

4 consecutive transmembrane segments (helical) span residues 3 to 23, 32 to 52, 59 to 79, and 90 to 110; these read FLYV…MNLW, ATLA…RFLA, LVLL…FSAF, and GAWL…LIMV. Na(+)-binding residues include Gly71 and Thr74.

This sequence belongs to the fluoride channel Fluc/FEX (TC 1.A.43) family.

Its subcellular location is the cell membrane. The catalysed reaction is fluoride(in) = fluoride(out). Its activity is regulated as follows. Na(+) is not transported, but it plays an essential structural role and its presence is essential for fluoride channel function. In terms of biological role, fluoride-specific ion channel. Important for reducing fluoride concentration in the cell, thus reducing its toxicity. The protein is Fluoride-specific ion channel FluC 2 of Listeria monocytogenes serovar 1/2a (strain ATCC BAA-679 / EGD-e).